A 375-amino-acid polypeptide reads, in one-letter code: MDAIHIGMSSTPLVKHTAGAGLKANRPRVMSKSGHSNVRIDKVDGIYLLYLQDLWTTVIDMKWRYKLTLFAATFVMTWFLFGVIYYAIAFIHGDLEPGEPISNHTPCIMKVDSLTGAFLFSLESQTTIGYGVRSITEECPHAIFLLVAQLVITTLIEIFITGTFLAKIARPKKRAETIKFSHCAVITKQNGKLCLVIQVANMRKSLLIQCQLSGKLLQTHVTKEGERILLNQATVKFHVDSSSESPFLILPMTFYHVLDETSPLRDLTPQNLKEKEFELVVLLNATVESTSAVCQSRTSYIPEEIYWGFEFVPVVSLSKNGKYVADFSQFEQIRKSPDCTFYCADSEKQQLEEKYRQEDQRERELRTLLLQQSNV.

Topologically, residues 1–60 are cytoplasmic; the sequence is MDAIHIGMSSTPLVKHTAGAGLKANRPRVMSKSGHSNVRIDKVDGIYLLYLQDLWTTVID. The chain crosses the membrane as a helical span at residues 61-87; sequence MKWRYKLTLFAATFVMTWFLFGVIYYA. Over 88 to 113 the chain is Extracellular; that stretch reads IAFIHGDLEPGEPISNHTPCIMKVDS. Positions 114–130 form an intramembrane region, helical; Pore-forming; that stretch reads LTGAFLFSLESQTTIGY. The Selectivity filter motif lies at 127-132; that stretch reads TIGYGV. Topologically, residues 131–139 are extracellular; it reads GVRSITEEC. A helical transmembrane segment spans residues 140 to 165; sequence PHAIFLLVAQLVITTLIEIFITGTFL. Residues 166–375 are Cytoplasmic-facing; that stretch reads AKIARPKKRA…RTLLLQQSNV (210 aa).

It belongs to the inward rectifier-type potassium channel (TC 1.A.2.1) family. KCNJ15 subfamily. Can form heteromultimeric channels with Kir5.1/KCNJ16. Interacts with PATJ.

It is found in the membrane. The protein localises to the cell membrane. It carries out the reaction K(+)(in) = K(+)(out). Channel activity is regulated by variations of cytosolic pH; reversibly inhibited by acidic pH values. Inhibited by Ba(2+) and Cs(+) in a voltage-dependent manner. Its function is as follows. Inward rectifier potassium channels are characterized by a greater tendency to allow potassium to flow into the cell rather than out of it. Their voltage dependence is regulated by the concentration of extracellular potassium; as external potassium is raised, the voltage range of the channel opening shifts to more positive voltages. The inward rectification is mainly due to the blockage of outward current by internal magnesium. The chain is ATP-sensitive inward rectifier potassium channel 15 (KCNJ15) from Homo sapiens (Human).